We begin with the raw amino-acid sequence, 678 residues long: MAQNSSLIAAELEALRQTIRAHEYAYYVLEAPNIADSEFDALMQKLRALEAASGLPIPADSPTQRVGGKADNRFRNVAHHIAMLSLDNVFNADEFADFYRRLQEQLSPTTAISLIAEPKFDGLAINLRYENGILQRASTRGDGITGEDVTQNVRTISTIPLRLNTHTPPDVIEIRGEIYMPKKAFYALNEQAAANGEKIFANPRNAASGSLRQLDPRITARRQLAFFAYGYGEITNYQLPETYEALLEQYRAWHIPVCSLHQKAATLPEALAAYQQFAKQREQLPFDIDGVVFKVNRFADQQRAGFLARAPRWAIAWKFPALEKTTRIEAIELQVGRTGAVTPVARLQPVTIAGVVVRSASLHNAREIARKDIRVGDTIFIRRAGDVIPEVVSVVLEKRLPDAPVFAMPEHCPVCAAAIVQNEDEAVARCSGGLHCPAQRVAALIHFASREALDIRGLGEKLIQQLVAQEFVRTPADLFCLTADDWASLPRMGKKSAHNVMTAIDAAKKTTLARFIYALGIRGVGSVNAQALAAHFGDLAAFMAADRAALQEIEGIGDVVAADIEHFFADEDNRAVIAAIVAAGVHWSTELTKKIIDAPLLGKTVVITGTLPSLSRAEAQKRLETLGAKVTSQVSRQTDFLLLGADAGSKLARAQAFSVPIIDEAQLQTWWQHYGNAV.

Residues 36 to 40, 85 to 86, and Glu117 each bind NAD(+); these read DSEFD and SL. Lys119 serves as the catalytic N6-AMP-lysine intermediate. NAD(+) is bound by residues Arg140, Glu177, Lys294, and Lys318. Positions 412, 415, 430, and 436 each coordinate Zn(2+). Residues 595-678 enclose the BRCT domain; it reads IIDAPLLGKT…TWWQHYGNAV (84 aa).

Belongs to the NAD-dependent DNA ligase family. LigA subfamily. Mg(2+) serves as cofactor. Mn(2+) is required as a cofactor.

The enzyme catalyses NAD(+) + (deoxyribonucleotide)n-3'-hydroxyl + 5'-phospho-(deoxyribonucleotide)m = (deoxyribonucleotide)n+m + AMP + beta-nicotinamide D-nucleotide.. Functionally, DNA ligase that catalyzes the formation of phosphodiester linkages between 5'-phosphoryl and 3'-hydroxyl groups in double-stranded DNA using NAD as a coenzyme and as the energy source for the reaction. It is essential for DNA replication and repair of damaged DNA. The polypeptide is DNA ligase (Dichelobacter nodosus (strain VCS1703A)).